The following is a 578-amino-acid chain: Putative ankyrin repeat protein FPV022 (578 aa).

11 ANK repeats span residues 4–34 (RRKS…DLNK), 38–67 (KNRT…KMSA), 68–97 (CKVP…SVDV), 100–129 (KGET…SGPY), 160–189 (YGHT…ITDN), 222–251 (EGTT…DPKV), 255–287 (HSVS…MVNM), 320–349 (YLSE…NINK), 353–382 (YGNI…DVNA), 386–415 (DGNT…DINS), and 419–449 (NGRT…KKNK).

The chain is Putative ankyrin repeat protein FPV022 from Fowlpox virus (strain NVSL) (FPV).